The sequence spans 54 residues: Large ribosomal subunit protein bL33B (54 aa).

The protein belongs to the bacterial ribosomal protein bL33 family.

The sequence is that of Large ribosomal subunit protein bL33B from Mycolicibacterium smegmatis (strain ATCC 700084 / mc(2)155) (Mycobacterium smegmatis).